Consider the following 234-residue polypeptide: Ribosomal RNA small subunit methyltransferase G (234 aa).

S-adenosyl-L-methionine contacts are provided by glycine 85, phenylalanine 90, and arginine 155.

Belongs to the methyltransferase superfamily. RNA methyltransferase RsmG family.

It localises to the cytoplasm. The enzyme catalyses guanosine(527) in 16S rRNA + S-adenosyl-L-methionine = N(7)-methylguanosine(527) in 16S rRNA + S-adenosyl-L-homocysteine. In terms of biological role, specifically methylates the N7 position of guanine in position 527 of 16S rRNA. The polypeptide is Ribosomal RNA small subunit methyltransferase G (Rhodopseudomonas palustris (strain BisB18)).